A 464-amino-acid chain; its full sequence is 3-deoxy-D-manno-octulosonic acid transferase (464 aa).

The helical; Signal-anchor transmembrane segment at 2-22 (MLLYYALSFILLPVYFIIILI) threads the bilayer. One can recognise an RPE1 insert domain in the interval 47–93 (DSLDFMQTSANKEEFKGDTSLRTTTYTLIREDEGLGSTYKLPLEASD). Glu107 serves as the catalytic Proton acceptor. Residues 311 to 312 (PR), 352 to 354 (FGE), and 377 to 380 (NILE) contribute to the CMP site.

The protein belongs to the glycosyltransferase group 1 family. Glycosyltransferase 30 subfamily.

It is found in the cell inner membrane. It carries out the reaction lipid IVA (E. coli) + CMP-3-deoxy-beta-D-manno-octulosonate = alpha-Kdo-(2-&gt;6)-lipid IVA (E. coli) + CMP + H(+). It participates in bacterial outer membrane biogenesis; LPS core biosynthesis. Functionally, involved in lipopolysaccharide (LPS) biosynthesis. Catalyzes the transfer of 3-deoxy-D-manno-octulosonate (Kdo) residue(s) from CMP-Kdo to lipid IV(A), the tetraacyldisaccharide-1,4'-bisphosphate precursor of lipid A. In Rickettsia conorii (strain ATCC VR-613 / Malish 7), this protein is 3-deoxy-D-manno-octulosonic acid transferase (waaA).